The primary structure comprises 330 residues: Aspartate--ammonia ligase (330 aa).

The protein belongs to the class-II aminoacyl-tRNA synthetase family. AsnA subfamily.

The protein localises to the cytoplasm. The catalysed reaction is L-aspartate + NH4(+) + ATP = L-asparagine + AMP + diphosphate + H(+). Its pathway is amino-acid biosynthesis; L-asparagine biosynthesis; L-asparagine from L-aspartate (ammonia route): step 1/1. This is Aspartate--ammonia ligase from Streptococcus uberis (strain ATCC BAA-854 / 0140J).